We begin with the raw amino-acid sequence, 466 residues long: 3-isopropylmalate dehydratase large subunit (466 aa).

The [4Fe-4S] cluster site is built by Cys-347, Cys-407, and Cys-410.

This sequence belongs to the aconitase/IPM isomerase family. LeuC type 1 subfamily. Heterodimer of LeuC and LeuD. The cofactor is [4Fe-4S] cluster.

The catalysed reaction is (2R,3S)-3-isopropylmalate = (2S)-2-isopropylmalate. Its pathway is amino-acid biosynthesis; L-leucine biosynthesis; L-leucine from 3-methyl-2-oxobutanoate: step 2/4. Functionally, catalyzes the isomerization between 2-isopropylmalate and 3-isopropylmalate, via the formation of 2-isopropylmaleate. The polypeptide is 3-isopropylmalate dehydratase large subunit (Shigella flexneri serotype 5b (strain 8401)).